Here is a 124-residue protein sequence, read N- to C-terminus: Small ribosomal subunit protein bS6 (124 aa).

This sequence belongs to the bacterial ribosomal protein bS6 family.

Binds together with bS18 to 16S ribosomal RNA. This chain is Small ribosomal subunit protein bS6, found in Campylobacter lari (strain RM2100 / D67 / ATCC BAA-1060).